Consider the following 149-residue polypeptide: Large ribosomal subunit protein bL9 (149 aa).

It belongs to the bacterial ribosomal protein bL9 family.

Its function is as follows. Binds to the 23S rRNA. This is Large ribosomal subunit protein bL9 from Synechococcus sp. (strain JA-2-3B'a(2-13)) (Cyanobacteria bacterium Yellowstone B-Prime).